Consider the following 440-residue polypeptide: MKLVLLLPWACCCLCGSALATGFLYPFPAAALQQHGYPEQGAGSPGNGYSSRRHWCHHTVTRTVSCQVQNGSETVVQRVYQSCRWPGPCANLVSYRTLIRPTYRVSYRTVTALEWRCCPGFTGSNCEEECMNCTRLSDMSERLTTLEAKVLLLEAAEQPSGPDNDLPPPQSTPPTWNEDFLPDAIPIAHPGPRRRRPTGPAGPPGQMGPPGPAGPPGSKGEQGQTGEKGPVGPPGLLGPPGPRGLPGEMGRPGPPGPPGPAGSPGLLPNTPQGVLYSLQTPTDKENGDSQLNPAVVDTVLTGIPGPRGPPGPPGPPGPHGPPGPPGAPGSQGLVDERVVARPSGEPSVKEEEDKASAAEGEGVQQLREALKILAERVLILEHMIGVHDPLASPEGGSGQDAALRANLKMKRGGPRPDGILAALLGPDPAQKSADQAGDRK.

The N-terminal stretch at 1–20 is a signal peptide; the sequence is MKLVLLLPWACCCLCGSALA. The 77-residue stretch at 52–128 folds into the EMI domain; it reads RRHWCHHTVT…PGFTGSNCEE (77 aa). Intrachain disulfides connect C56–C118, C83–C89, and C117–C126. Residue N70 is glycosylated (N-linked (GlcNAc...) asparagine). The N-linked (GlcNAc...) asparagine glycan is linked to N132. Disordered regions lie at residues 157 to 362 and 390 to 440; these read EQPS…EGEG and LASP…GDRK. The region spanning 199–267 is the Collagen-like 1 domain; it reads GPAGPPGQMG…PGPAGSPGLL (69 aa). 3 stretches are compositionally biased toward pro residues: residues 200–215, 231–243, and 252–261; these read PAGPPGQMGPPGPAGP, VGPPGLLGPPGPR, and PGPPGPPGPA. The span at 269 to 281 shows a compositional bias: polar residues; sequence NTPQGVLYSLQTP. The Collagen-like 2 domain maps to 302 to 334; it reads GIPGPRGPPGPPGPPGPHGPPGPPGAPGSQGLV. The span at 306–327 shows a compositional bias: pro residues; sequence PRGPPGPPGPPGPHGPPGPPGA. Over residues 347–356 the composition is skewed to basic and acidic residues; sequence SVKEEEDKAS.

As to quaternary structure, homotrimer or heterotrimer. Post-translationally, hydroxylated on proline residues. In terms of processing, N-glycosylated. Specifically expressed in the testis and ovary in adult tissues.

Its subcellular location is the secreted. The protein resides in the extracellular space. It is found in the extracellular matrix. This chain is Collagen alpha-1(XXVI) chain (Col26a1), found in Mus musculus (Mouse).